We begin with the raw amino-acid sequence, 318 residues long: Ankyrin repeat and SOCS box protein 7 (318 aa).

ANK repeat units lie at residues 13-42, 46-75, 80-109, 116-145, 149-178, 180-208, and 213-242; these read QEEL…SPNG, NGWT…DPTV, GGFT…RSDI, DGWT…EVDP, KGTT…NIDI, NGFL…DTNL, and DGQT…DTNT. The region spanning 265 to 318 is the SOCS box domain; it reads LDFLQEVTRQPRNLQDLCRIKIRQCIGLQNLKLLDELPIAKVMKDYLKHKFDDI.

This sequence belongs to the ankyrin SOCS box (ASB) family. In terms of assembly, interacts with CUL5. Interacts with RNF7. Interacts with PSRC1.

The protein operates within protein modification; protein ubiquitination. In terms of biological role, probable substrate-recognition component of a SCF-like ECS (Elongin-Cullin-SOCS-box protein) E3 ubiquitin-protein ligase complex which mediates the ubiquitination and subsequent proteasomal degradation of target proteins. Plays a role in spindle dynamics and genome integrity by targeting the mitotic progression protein PSRC1 for proteasomal degradation in a cell cycle-dependent manner. Also participates in meiosis by mediating the proper attachment between kinetochores and microtubules. This Homo sapiens (Human) protein is Ankyrin repeat and SOCS box protein 7 (ASB7).